Here is a 553-residue protein sequence, read N- to C-terminus: uncharacterized protein (553 aa).

This is an uncharacterized protein from Rickettsia prowazekii (strain Madrid E).